The following is a 254-amino-acid chain: Diphthine synthase (254 aa).

Residues Leu-11, Asp-86, Ile-89, 114–115, Leu-166, Leu-207, and His-232 contribute to the S-adenosyl-L-methionine site; that span reads SV.

The protein belongs to the diphthine synthase family. As to quaternary structure, homodimer.

It catalyses the reaction 2-[(3S)-amino-3-carboxypropyl]-L-histidyl-[translation elongation factor 2] + 3 S-adenosyl-L-methionine = diphthine-[translation elongation factor 2] + 3 S-adenosyl-L-homocysteine + 3 H(+). Its pathway is protein modification; peptidyl-diphthamide biosynthesis. Its function is as follows. S-adenosyl-L-methionine-dependent methyltransferase that catalyzes the trimethylation of the amino group of the modified target histidine residue in translation elongation factor 2 (EF-2), to form an intermediate called diphthine. The three successive methylation reactions represent the second step of diphthamide biosynthesis. The sequence is that of Diphthine synthase from Sulfurisphaera tokodaii (strain DSM 16993 / JCM 10545 / NBRC 100140 / 7) (Sulfolobus tokodaii).